The primary structure comprises 90 residues: LYR motif-containing protein 2 (90 aa).

The transit peptide at 1-19 (MASSRLPASALTLKQFIQR) directs the protein to the mitochondrion.

It belongs to the complex I LYR family.

Its subcellular location is the mitochondrion. In terms of biological role, involved in efficient integration of the N-module into mitochondrial respiratory chain complex I. This chain is LYR motif-containing protein 2 (lyrm2), found in Salmo salar (Atlantic salmon).